Reading from the N-terminus, the 463-residue chain is Hydroxyacid-oxoacid transhydrogenase, mitochondrial (463 aa).

Belongs to the iron-containing alcohol dehydrogenase family. Hydroxyacid-oxoacid transhydrogenase subfamily.

It localises to the mitochondrion. It carries out the reaction (S)-3-hydroxybutanoate + 2-oxoglutarate = (R)-2-hydroxyglutarate + acetoacetate. The enzyme catalyses 4-hydroxybutanoate + 2-oxoglutarate = (R)-2-hydroxyglutarate + succinate semialdehyde. Catalyzes the cofactor-independent reversible oxidation of gamma-hydroxybutyrate (GHB) to succinic semialdehyde (SSA) coupled to reduction of 2-ketoglutarate (2-KG) to D-2-hydroxyglutarate (D-2-HG). L-3-hydroxybutyrate (L-3-OHB) is also a substrate for HOT when using 2-KG as hydrogen acceptor, resulting in the formation of D-2-HG. This is Hydroxyacid-oxoacid transhydrogenase, mitochondrial (adhfe1) from Xenopus laevis (African clawed frog).